A 344-amino-acid polypeptide reads, in one-letter code: Heat-inducible transcription repressor HrcA (344 aa).

This sequence belongs to the HrcA family.

Functionally, negative regulator of class I heat shock genes (grpE-dnaK-dnaJ and groELS operons). Prevents heat-shock induction of these operons. The protein is Heat-inducible transcription repressor HrcA of Streptococcus pyogenes serotype M6 (strain ATCC BAA-946 / MGAS10394).